Reading from the N-terminus, the 275-residue chain is Bis(5'-nucleosyl)-tetraphosphatase, symmetrical (275 aa).

The protein belongs to the Ap4A hydrolase family.

The catalysed reaction is P(1),P(4)-bis(5'-adenosyl) tetraphosphate + H2O = 2 ADP + 2 H(+). Hydrolyzes diadenosine 5',5'''-P1,P4-tetraphosphate to yield ADP. The protein is Bis(5'-nucleosyl)-tetraphosphatase, symmetrical of Haemophilus influenzae (strain PittGG).